Here is a 492-residue protein sequence, read N- to C-terminus: Serine carboxypeptidase-like 31 (492 aa).

Residues 1-30 form the signal peptide; that stretch reads MDNYQTKNISNLLTSLCFTTLLILAPVVIC. 3 disulfides stabilise this stretch: Cys105/Cys376, Cys270/Cys283, and Cys307/Cys344. N-linked (GlcNAc...) asparagine glycosylation is present at Asn156. Ser198 is a catalytic residue. N-linked (GlcNAc...) asparagine glycosylation is found at Asn221 and Asn271. Residues Asn372 and Asn383 are each glycosylated (N-linked (GlcNAc...) asparagine). Catalysis depends on residues Asp413 and His465.

This sequence belongs to the peptidase S10 family. In terms of tissue distribution, expressed in roots, senescent leaves, stems, flowers and siliques.

It is found in the secreted. In terms of biological role, probable carboxypeptidase. This is Serine carboxypeptidase-like 31 (SCPL31) from Arabidopsis thaliana (Mouse-ear cress).